The sequence spans 598 residues: Pentatricopeptide repeat-containing protein At5g14820, mitochondrial (598 aa).

The N-terminal 98 residues, 1-98, are a transit peptide targeting the mitochondrion; the sequence is MAAAPWLYLS…RGFSSGSSNV (98 aa). PPR repeat units follow at residues 193-227, 229-261, 262-292, 296-330, 331-365, 366-400, 401-435, 436-470, 471-505, and 506-540; these read DSRTYNSMMSILAKTRQFETMVSVLEEMGTKGLLT, ETFTIAMKAFAAAKERKKAVGIFELMKKYKFKI, GVETINCLLDSLGRAKLGKEAQVLFDKLKER, NMMTYTVLLNGWCRVRNLIEAARIWNDMIDHGLKP, DIVAHNVMLEGLLRSMKKSDAIKLFHVMKSKGPCP, NVRSYTIMIRDFCKQSSMETAIEYFDDMVDSGLQP, DAAVYTCLITGFGTQKKLDTVYELLKEMQEKGHPP, DGKTYNALIKLMANQKMPEHGTRIYNKMIQNEIEP, SIHTFNMIMKSYFVARNYEMGRAVWDEMIKKGICP, and DDNSYTVLIRGLISEGKSREACRYLEEMLDKGMKT.

This sequence belongs to the PPR family. P subfamily.

It localises to the mitochondrion. The chain is Pentatricopeptide repeat-containing protein At5g14820, mitochondrial from Arabidopsis thaliana (Mouse-ear cress).